The following is a 291-amino-acid chain: Nucleotide-binding protein lin2617 (291 aa).

An ATP-binding site is contributed by 13–20 (GMSGAGKT). Residue 63–66 (DLRG) participates in GTP binding.

It belongs to the RapZ-like family.

Functionally, displays ATPase and GTPase activities. This chain is Nucleotide-binding protein lin2617, found in Listeria innocua serovar 6a (strain ATCC BAA-680 / CLIP 11262).